The following is a 236-amino-acid chain: MKYKLLPCLLAIFLTGCDRTEVTLSFTPEMASFSNEFDFDPLRGPVKDFTQTLMDEQGEVTKRVSGTLSEEGCFDSLELLDLENNTVVALVLDANYYRDAQTLEKRVRLQGKCQLAELPSAGVSWETDDNGFVIKASSKQMQMEYRYDDQGYPLGKTTKSNDKTLSVSATPSTDPIKKLDYTAVTLLNNQRVGNVKQSCEYDSHANPVDCQLIIVDEGVKPAVERVYTIKNTIDYY.

Residues 1 to 16 (MKYKLLPCLLAIFLTG) form the signal peptide. The N-palmitoyl cysteine moiety is linked to residue cysteine 17. Cysteine 17 carries S-diacylglycerol cysteine lipidation.

This sequence belongs to the UPF0257 family.

Its subcellular location is the cell membrane. The chain is UPF0257 lipoprotein YnfC from Escherichia coli O7:K1 (strain IAI39 / ExPEC).